The primary structure comprises 465 residues: Pancreatic triacylglycerol lipase (465 aa).

Positions 1–16 (MLLVWSLALLLGAVAG) are cleaved as a signal peptide. 2 disulfide bridges follow: Cys-20–Cys-26 and Cys-107–Cys-118. Catalysis depends on Ser-169, which acts as the Nucleophile. Asp-193 functions as the Charge relay system in the catalytic mechanism. Ca(2+)-binding residues include Glu-204, Arg-207, Asp-209, and Asp-212. Cysteines 254 and 278 form a disulfide. His-280 acts as the Charge relay system in catalysis. 3 disulfides stabilise this stretch: Cys-302–Cys-313, Cys-316–Cys-321, and Cys-449–Cys-465. Residues 355–465 (WRYKVSVTLS…EDVLLTLNAC (111 aa)) enclose the PLAT domain.

Belongs to the AB hydrolase superfamily. Lipase family. In terms of assembly, forms a 1:1 stoichiometric complex with (pro)colipase/CLPS. Expressed in many tissues with highest expression in liver. During hibernation there is a significant increases in expression in heart, white adipose tissue (WAT), and testis; but not in pancreas.

It is found in the secreted. The catalysed reaction is a triacylglycerol + H2O = a diacylglycerol + a fatty acid + H(+). The enzyme catalyses 1,2,3-tributanoylglycerol + H2O = dibutanoylglycerol + butanoate + H(+). It carries out the reaction 1,2,3-tri-(9Z-octadecenoyl)-glycerol + H2O = di-(9Z)-octadecenoylglycerol + (9Z)-octadecenoate + H(+). It catalyses the reaction all-trans-retinyl hexadecanoate + H2O = all-trans-retinol + hexadecanoate + H(+). The catalysed reaction is 1,2-di-(9Z-octadecenoyl)-glycerol + H2O = (9Z-octadecenoyl)-glycerol + (9Z)-octadecenoate + H(+). With respect to regulation, inhibited by bile salts, is reactivated by (pro)colipase/CLPS. Functionally, plays an important role in fat metabolism. It preferentially splits the esters of long-chain fatty acids at positions 1 and 3, producing mainly 2-monoacylglycerol and free fatty acids, and shows considerably higher activity against insoluble emulsified substrates than against soluble ones. Plays a role in hibernation as a key enzyme that shows high activity at low temperatures. When expressed in the hibernating heart it liberates fatty acids from triglycerides at temperatures as low as 0 degrees Celsius. The polypeptide is Pancreatic triacylglycerol lipase (PNLIP) (Ictidomys tridecemlineatus (Thirteen-lined ground squirrel)).